The sequence spans 539 residues: O-phosphoserine--tRNA(Cys) ligase (539 aa).

Substrate is bound by residues 188–190 (HMT), 233–235 (SAS), 275–276 (YY), and Asn-327.

This sequence belongs to the class-II aminoacyl-tRNA synthetase family. O-phosphoseryl-tRNA(Cys) synthetase subfamily. In terms of assembly, homotetramer. Interacts with SepCysS.

It carries out the reaction tRNA(Cys) + O-phospho-L-serine + ATP = O-phospho-L-seryl-tRNA(Cys) + AMP + diphosphate. Catalyzes the attachment of O-phosphoserine (Sep) to tRNA(Cys). This is O-phosphoserine--tRNA(Cys) ligase from Methanosarcina acetivorans (strain ATCC 35395 / DSM 2834 / JCM 12185 / C2A).